The following is a 177-amino-acid chain: Ribosome maturation factor RimM (177 aa).

The 78-residue stretch at 100-177 (EDEYYWSDLV…TVLVAWPSDY (78 aa)) folds into the PRC barrel domain.

The protein belongs to the RimM family. Binds ribosomal protein uS19.

The protein resides in the cytoplasm. Its function is as follows. An accessory protein needed during the final step in the assembly of 30S ribosomal subunit, possibly for assembly of the head region. Essential for efficient processing of 16S rRNA. May be needed both before and after RbfA during the maturation of 16S rRNA. It has affinity for free ribosomal 30S subunits but not for 70S ribosomes. This is Ribosome maturation factor RimM from Psychrobacter cryohalolentis (strain ATCC BAA-1226 / DSM 17306 / VKM B-2378 / K5).